The following is a 217-amino-acid chain: Small ribosomal subunit protein uS3 (217 aa).

The 69-residue stretch at 38–106 (IRKFINKELA…QVHINIIEIK (69 aa)) folds into the KH type-2 domain.

This sequence belongs to the universal ribosomal protein uS3 family. Part of the 30S ribosomal subunit. Forms a tight complex with proteins S10 and S14.

Its function is as follows. Binds the lower part of the 30S subunit head. Binds mRNA in the 70S ribosome, positioning it for translation. This chain is Small ribosomal subunit protein uS3, found in Streptococcus equi subsp. equi (strain 4047).